The following is a 147-amino-acid chain: Large ribosomal subunit protein uL13 (147 aa).

The protein belongs to the universal ribosomal protein uL13 family. As to quaternary structure, part of the 50S ribosomal subunit.

In terms of biological role, this protein is one of the early assembly proteins of the 50S ribosomal subunit, although it is not seen to bind rRNA by itself. It is important during the early stages of 50S assembly. The protein is Large ribosomal subunit protein uL13 of Lactobacillus johnsonii (strain CNCM I-12250 / La1 / NCC 533).